The chain runs to 239 residues: Ras-like protein B (239 aa).

GTP contacts are provided by residues 13–18 (GVGKTA), 29–35 (VETYDPT), 59–60 (AG), 139–142 (NKSD), and 169–171 (SAK). Positions 32 to 40 (YDPTIEDSY) match the Effector region motif. The disordered stretch occupies residues 191–227 (RQQQQGGRAQDRRPTGLGPMRDRDAGPEYPKTFRPDR). Positions 199 to 226 (AQDRRPTGLGPMRDRDAGPEYPKTFRPD) are enriched in basic and acidic residues.

It belongs to the small GTPase superfamily. Ras family. In terms of assembly, interacts with mpkA.

The enzyme catalyses GTP + H2O = GDP + phosphate + H(+). Functionally, ras-like protein involved in the activation of Ras protein signal transduction. Ras proteins bind GDP/GTP and possess intrinsic GTPase activity. Plays a role in hyphal morphology and conidiophore development. Required for full virulence. This is Ras-like protein B from Aspergillus fumigatus (strain ATCC MYA-4609 / CBS 101355 / FGSC A1100 / Af293) (Neosartorya fumigata).